The primary structure comprises 4001 residues: MNNDAKNHESDDLNVRSTAYFNQQTTTNQPKAPATSKNNTGSGSGSNNNNNNTNQNPNRQLNHNLPRIAAARQSIAAALLKNSGRKILTAKNEPLTTTESSGVLTNTPLPSNSRLKVNNNNNTNNTAKMSGTSSSQSSATPTPPTASSSTTTTTTTNISTGGGGSGSSGGGGGSTTVIANPASVTNTGAGSAAKFRAAVASAPSPALPATNAPANATAAAAIAAIATAPAPSSSSSSSSSSKKTRAAVAALKRQVALQQQQPVTGNAPNMTSKDSAHLKFATTTLLMGAAAAAADSNAGAALGGSGAGGSGSSSSVGAVGGARMALNPAVDMANAAVLLKQKLKDAAAAASASASNRSATSSMSSTASSLSSSAGIVNAISSALQNIITPDTDTDTEFYPQPVTTDLSESEEESVSEDDIPESDPDSCPHEGEVREDEDETEEESEDSDESEGEEEEEDEEEIDVLQDNDADDEEIDDEDEEEDAPEVSSFLLDANNKRSSNISALLEAAANEKAPVLRHATHAIDETKQALTKMRCASSPRDKNSGFSRSLVAACTDNDVNTVKRLLCKGNVNLNDAAASTDDGESLLSMACSAGYYELAQVLLAMSAAQVEDKGQKDSTPLMEAASAGHLDIVKLLLNHNADVNAHCATGNTPLMFACAGGQVDVVKVLLKHGANVEEQNENGHTPLMEAASAGHVEVAKVLLEHGAGINTHSNEFKESALTLACYKGHLDMVRFLLQAGADQEHKTDEMHTALMEASMDGHVEVARLLLDSGAQVNMPTDSFESPLTLAACGGHVELATLLIERGANIEEVNDEGYTPLMEAAREGHEEMVALLLSKGANINATTEETQETALTLACCGGFMEVAAFLIKEGANLELGASTPLMEASQEGHTDLVSFLLKKKANVHAETQTGDTALTHACENGHTDAAGVLLSYGAELEHESEGGRTPLMKACRAGHLCTVKFLIQKGANVNKQTTSNDHTALSLACAGGHQSVVELLLKNNADPFHKLKDNSTMLIEASKGGHTRVVELLFRYPNISPTENAASANVTQAAPTSNQPGPNQMRQKIMKQQLQHQLQQLNAPPGLHELSEAARASNQQHFHQQQFSSAGNGSSNIVAMGTGDFLDAGELQLTATAGMSAGAGTSTTGSETGMEEYGEVGGIDLTTLGAQQQEGLIAKSRLFHLQQQQQQQQQQQQQQQQQQQQQQQQQQQQQQPPAAGQHQLVPCKHFDLDMEHINSLQPPQKAPPAPPVLFHTVCQQPVMQQQQQQLQPGQLKLKAMLPNRNRALKTAEVVEFIDCPVDQQQPGEQVRTQPLGEDGKTPQFACAGEDPRLQRRRGFMPELKKGELPPESSSSDPNELALKGADNNQPVPTALDNSACAQIPARNSGGAITHSSEVLQSTAISDRPKVKATNKNNRKQAAAAAAAAAAAAAAAAAAAQHAQQVLPNPMVSIYNNLHLQHLQHPHLQFQQQLQLHHQRVAGLDNAAAAAAAAASSANMAYSISPASPLPSPTGSGNYVDQQLQQQSMDVALQRKTAMDDFRGMLETAVNGPRGRKDLALNTPQLNFFKDGWHMVGVHNFFGDQPKSPTETPPEMEETTMSSPTEADRLGSEPRAEMKNLATLCSAAAAAAAVAAVNKDQVEISSDLESECEDDAEGGAGADCEENTLPPEPIELAAALREDGIIVEEEEDDEEEDDDDEEQDTNSGEVDKLNYDDEDAEVDNDGEVDYIDEDEGGGEGEEEEDDADDDEFFLDEPDSDQGTGNNNNNSKSGASSLPLKQRKMATRLENLILNSQTVCDFPPELSNSELVHVLPQISNLKAAANSNAALNSVLQQQLAAASAAAAHAKASVVHQKQQHGEGDQQCEDDGSASASELYSGLEHFANDGEMEDIFQELASSLNYPELAEFSLNQMCKGRFAGNWAQSSGKWTGQEQLVGVVRSPGLINPGDVPQDAQRQANLVLLDYPMQQNIQLEQRLLDAEEMHLQQHQQTPLSLLPFTDEQQQQLHHQALSNASDFQQHQQLALENDPELKQQLQQNSNARIIKAVAAQHQQQPPTNFVYNVESGDKNAPPVQLLFQLPPHMAQHQAQQQQGVGEPLTEQQQQQLHAEQAHLFQHRTGGQRPPTQSELEQVAQELLLQRSGQVPAGAPVVGVQAIPLKQKHFNLHPPPCPPTCVQHQVATQTHPASVVVPQPAVGYTQFALQASQQQQMQQNELSIWPMATPTPAPSSGVSSTKSMPGGIAKKAIDKQSRKERRCVVRQTPAGIQENTKLHLQPQVATAQQQFLVQNQLAVATTVSLDKTIEIDSETESNHDTALTLACAGGHEELVELLINRGANIEHRDKKGFTPLILAATAGHDKVVDILLKHSAELEAQSERTKDTPLSLACSGGRYEVVELLLSVGANKEHRNVSDYTPLSLAASGGYVNIIKLLLSHGAEINSRTGSKLGISPLMLAAMNGHTPAVKLLLDQGSDINAQIETNRNTALTLACFQGRHEVVSLLLDRRANVEHRAKTGLTPLMEAASGGYIEVGRVLLDKGADVNAAPVPTSRDTALTIAADKGHQKFVELLLSRNASVEVKNKKGNSPLWLAAHGGHLSVVELLYDHNADIDSQDNRRVSCLMAAFRKGHTKIVKWMVQYVSQFPSDQEMIRFIGTISDKELIDKCFDCMKILRSAKEAQAVKANKNASILLEELDLERTREESRKAAAARRRERKKKKKMEKKEEKRRQQQGNGPGGDDMQGDDDDASDKDDDSDKDDEDEEAAPAAAREEGDSGIDQGSCSSGDTKGARFGGSQSAQAAEAAANSVSTNSQGKKNKKQAKNKVLISVEPTQPVITSNSVLKGVCAKKHPAVEVVKQPPATQQAAPLKRQLDVKKEEPALKKKEEKNSSSSSSSKREKENLAPKEVALPAKQQPSSSSKLQSSESASNINSSTATNTSSANTTRKEVAKPASQTASATTLNPAKRTEVDGWKEVVRKSSAQQTTAVGASGAPLPVTATSSATSVQHHPHHHLANSSSNSSSSLTTSTTTAASSVPEMTCKKVQVPVNAISRVIGRGGSNINAIRATTGAHIEVEKQGKNQSERCITIKGLTDATKQAHMLILALIKDPDVDILQMLPRINSSIKQASSGGASTPMSVGTWDNRTAAGVNAYTFSSAASTTSTSSSSSASSTTPAGASYSNAHKQHQQQPQSVKGPSGRSSTSVKSNGSSTKVSASSGSGSRSGRAGSSYLAQQQPGRSSGGGSSNGVIKSKSESSSKSLPAAQKSSTTLGKSSTVSPGAQNFAKAAAIGQSSPKKAEGGATSAVVTSAGGRSSGVVAPFGRGKPVAGQGGPAATAASNVAQLGSVSGNSNILAGPIGTFNVADVAAVNAAAAAGAAAATNSNVKPIAPIAPPSKRVGSPTQVQQQHQTQQQQQQQLPQPAPVPGPQPQQQPLQQQQQQQAPQQQPQQPNQQQQPQTSQQNLVINTNLLNDLMAASAANTTSDSFSAQLAAKLSSAYSLFSDYQQSQWGKLGDPGIGGGAGAVGDGLPQADASKAPGYNRNILSSPVGSSKASSNHSTSPPVGNVIQQQQQQQPQSSQQALNIITSGPGGPATAPARSPMVSANEGNPAVGQPSMNGTQGLGETAPAHSPGVIKPPTATVPIQRHVPMPISAPEAGAPPTFGAIGSNPASGNNSAAAQAAAAAAASAMIDRQQQNLQNLQTLQNLQRMVGASQQQQPQQQLNYPMDPTSSFIVDANNVLRLNPRVIFPQGNTKPPQPPPQGGTQSNVFGGNPGRQPPGTGARQPGGAAAQRWYGGTLEYPSYTGRDMLHLENGAGGMAGMGSPSAMSPNHDDIRKMPRPIGTERAASWKYNNFNVGGPSLNMEDALASVLPPWAHELKAQPPGLQQPPPPPQSQQQQQQPLNWLKQQPQQQQYRAYNNGPYPQQQQQHEPMNMPMDYHNMQAPPNMSQQQQQHVNLMPSYGYQHFVGAPGAVDISAHMPDKMEVWDHHDKHMPWTNYTTNWSN.

The segment covering 1–14 (MNNDAKNHESDDLN) has biased composition (basic and acidic residues). Disordered regions lie at residues 1–61 (MNND…NRQL), 91–174 (KNEP…GGGS), and 391–494 (DTDT…FLLD). The span at 15 to 30 (VRSTAYFNQQTTTNQP) shows a compositional bias: polar residues. Residues 38-61 (NNTGSGSGSNNNNNNTNQNPNRQL) show a composition bias toward low complexity. A compositionally biased stretch (polar residues) spans 94–117 (PLTTTESSGVLTNTPLPSNSRLKV). Residues 118–159 (NNNNNTNNTAKMSGTSSSQSSATPTPPTASSSTTTTTTTNIS) show a composition bias toward low complexity. The span at 160–174 (TGGGGSGSSGGGGGS) shows a compositional bias: gly residues. Composition is skewed to acidic residues over residues 408-425 (SESE…ESDP) and 434-486 (VRED…EDAP). A Phosphoserine modification is found at S501. ANK repeat units lie at residues 546-575 (SGFS…NVNL), 584-614 (DGES…QVED), 618-647 (KDST…DVNA), 651-680 (TGNT…NVEE), 684-713 (NGHT…GINT), 718-747 (FKES…DQEH), 751-780 (EMHT…QVNM), 784-813 (SFES…NIEE), 817-846 (EGYT…NINA), 851-880 (TQET…NLEL), 881-910 (GAST…NVHA), 914-943 (TGDT…ELEH), 947-976 (GGRT…NVNK), 981-1011 (NDHT…PFHK), and 1014-1043 (DNST…ISPT). Disordered regions lie at residues 1046–1067 (AASA…NQMR) and 1306–1376 (QPGE…PTAL). The span at 1367–1376 (DNNQPVPTAL) shows a compositional bias: polar residues. 2 positions are modified to phosphoserine: S1389 and S1588. Disordered stretches follow at residues 1583 to 1612 (GDQP…RLGS), 1646 to 1669 (SDLE…ENTL), 1682 to 1779 (EDGI…SLPL), 1852 to 1872 (VVHQ…DGSA), 2084 to 2108 (MAQH…QQLH), and 2225 to 2256 (TPAP…KERR). Acidic residues-rich tracts occupy residues 1646–1657 (SDLESECEDDAE), 1685–1704 (IIVE…EEQD), and 1716–1759 (DDED…EPDS). Residues 1760–1776 (DQGTGNNNNNSKSGASS) are compositionally biased toward low complexity. Residues 2084-2093 (MAQHQAQQQQ) are compositionally biased toward low complexity. Over residues 2228 to 2237 (PSSGVSSTKS) the composition is skewed to polar residues. ANK repeat units follow at residues 2312–2341 (NHDT…NIEH), 2345–2374 (KGFT…ELEA), 2379–2408 (TKDT…NKEH), 2412–2441 (SDYT…EINS), 2447–2476 (LGIS…DINA), 2481–2510 (NRNT…NVEH), 2514–2543 (TGLT…DVNA), 2549–2578 (SRDT…SVEV), 2582–2611 (KGNS…DIDS), and 2615–2644 (RRVS…QFPS). Positions 2674-2732 (AKEAQAVKANKNASILLEELDLERTREESRKAAAARRRERKKKKKMEKKEEKRRQQQGN) form a coiled coil. Residue S2687 is modified to Phosphoserine. Residue T2698 is modified to Phosphothreonine. The disordered stretch occupies residues 2699–3033 (REESRKAAAA…TSTTTAASSV (335 aa)). Residues 2706–2719 (AAARRRERKKKKKM) show a composition bias toward basic residues. Residues 2739 to 2762 (MQGDDDDASDKDDDSDKDDEDEEA) are compositionally biased toward acidic residues. 2 positions are modified to phosphoserine: S2747 and S2753. Low complexity predominate over residues 2793-2810 (SQSAQAAEAAANSVSTNS). The segment covering 2828–2839 (EPTQPVITSNSV) has biased composition (polar residues). The segment covering 2868–2886 (RQLDVKKEEPALKKKEEKN) has biased composition (basic and acidic residues). The span at 2906–2941 (ALPAKQQPSSSSKLQSSESASNINSSTATNTSSANT) shows a compositional bias: low complexity. Polar residues predominate over residues 2950–2960 (ASQTASATTLN). Residues 2963–2975 (KRTEVDGWKEVVR) show a composition bias toward basic and acidic residues. Over residues 2995-3004 (TATSSATSVQ) the composition is skewed to polar residues. Residues 3012–3032 (ANSSSNSSSSLTTSTTTAASS) show a composition bias toward low complexity. The KH domain occupies 3036 to 3100 (MTCKKVQVPV…DATKQAHMLI (65 aa)). 3 stretches are compositionally biased toward low complexity: residues 3156-3178 (ASTT…ASYS), 3195-3227 (SGRS…AGSS), and 3244-3257 (NGVI…SSKS). Disordered regions lie at residues 3156-3329 (ASTT…GQGG), 3383-3457 (KPIA…QTSQ), 3520-3636 (AVGD…PPTA), and 3744-3786 (IFPQ…GGAA). The span at 3262–3278 (QKSSTTLGKSSTVSPGA) shows a compositional bias: polar residues. Residues 3396 to 3416 (GSPTQVQQQHQTQQQQQQQLP) are compositionally biased toward low complexity. A compositionally biased stretch (pro residues) spans 3417-3427 (QPAPVPGPQPQ). The span at 3428-3457 (QQPLQQQQQQQAPQQQPQQPNQQQQPQTSQ) shows a compositional bias: low complexity. Residues 3539 to 3559 (NILSSPVGSSKASSNHSTSPP) show a composition bias toward polar residues. The segment covering 3565-3577 (QQQQQQQPQSSQQ) has biased composition (low complexity). S3596 carries the phosphoserine modification. The span at 3774-3786 (PPGTGARQPGGAA) shows a compositional bias: low complexity. Phosphoserine occurs at positions 3820, 3822, and 3825. Residues 3876–3945 (KAQPPGLQQP…HNMQAPPNMS (70 aa)) form a disordered region. Residues 3891–3910 (SQQQQQQPLNWLKQQPQQQQ) show a composition bias toward low complexity.

As to quaternary structure, may interact with Unc-89 (via protein kinase domain 1 or 2). In terms of tissue distribution, expressed ubiquitously in eye imaginal disk, slightly higher expression is seen in presumptive photoreceptors. Expressed in indirect flight muscle (IFM) (at protein level).

It is found in the cytoplasm. It localises to the myofibril. Its subcellular location is the sarcomere. The protein localises to the z line. The protein resides in the m line. In terms of biological role, mediator of receptor tyrosine kinase (RTK) signaling, and may act either downstream of MAPK or transduce signaling through a parallel branch of the RTK pathway. Required for the development and organization of indirect flight muscle sarcomeres by regulating the formation of M line and H zone and the correct assembly of thick and thin filaments in the sarcomere. The protein is Ankyrin repeat and KH domain-containing protein mask of Drosophila melanogaster (Fruit fly).